The primary structure comprises 286 residues: Probable syntaxin-7B (286 aa).

Topologically, residues 1 to 257 (MTDRQPLISK…YVYKSSYRKK (257 aa)) are cytoplasmic. The span at 97 to 107 (LSTSNKKESSH) shows a compositional bias: basic and acidic residues. Positions 97–160 (LSTSNKKESS…TNNNNNNNNN (64 aa)) are disordered. Residues 114 to 160 (QQQQQQQNNGNSNNNGYNTRGGYNQQQQQQQQQYNDYTNNNNNNNNN) are compositionally biased toward low complexity. Residues 185–247 (NRILDERNAN…EDAVVELEKA (63 aa)) enclose the t-SNARE coiled-coil homology domain. A helical; Anchor for type IV membrane protein membrane pass occupies residues 258–278 (MIIFVICLLVTLVAVGIFLAI). The Vesicular portion of the chain corresponds to 279-286 (YYGVIKKK).

This sequence belongs to the syntaxin family.

It is found in the membrane. The protein is Probable syntaxin-7B (syn7B) of Dictyostelium discoideum (Social amoeba).